We begin with the raw amino-acid sequence, 122 residues long: Large ribosomal subunit protein uL14 (122 aa).

This sequence belongs to the universal ribosomal protein uL14 family. In terms of assembly, part of the 50S ribosomal subunit. Forms a cluster with proteins L3 and L19. In the 70S ribosome, L14 and L19 interact and together make contacts with the 16S rRNA in bridges B5 and B8.

Functionally, binds to 23S rRNA. Forms part of two intersubunit bridges in the 70S ribosome. The chain is Large ribosomal subunit protein uL14 from Geobacillus kaustophilus (strain HTA426).